A 445-amino-acid polypeptide reads, in one-letter code: Chromosomal replication initiator protein DnaA (445 aa).

Positions 1 to 72 are domain I, interacts with DnaA modulators; sequence MSGIDTIWEK…QEAFIEEIGE (72 aa). Positions 72 to 107 are domain II; sequence EKLNIKVISSEDELMNNEKEAPVRKTQQTSQELLPN. A domain III, AAA+ region region spans residues 108 to 324; that stretch reads QLNTDNTFDT…GALTRVSAYS (217 aa). Residues G152, G154, K155, and T156 each contribute to the ATP site. Residues 325–445 are domain IV, binds dsDNA; it reads KLVNRELNSD…LKNIEKDITS (121 aa).

Belongs to the DnaA family. Oligomerizes as a right-handed, spiral filament on DNA at oriC.

Its subcellular location is the cytoplasm. Plays an essential role in the initiation and regulation of chromosomal replication. ATP-DnaA binds to the origin of replication (oriC) to initiate formation of the DNA replication initiation complex once per cell cycle. Binds the DnaA box (a 9 base pair repeat at the origin) and separates the double-stranded (ds)DNA. Forms a right-handed helical filament on oriC DNA; dsDNA binds to the exterior of the filament while single-stranded (ss)DNA is stabiized in the filament's interior. The ATP-DnaA-oriC complex binds and stabilizes one strand of the AT-rich DNA unwinding element (DUE), permitting loading of DNA polymerase. After initiation quickly degrades to an ADP-DnaA complex that is not apt for DNA replication. Binds acidic phospholipids. This Macrococcus caseolyticus (strain JCSC5402) (Macrococcoides caseolyticum) protein is Chromosomal replication initiator protein DnaA.